A 182-amino-acid polypeptide reads, in one-letter code: Adenine phosphoribosyltransferase (182 aa).

Belongs to the purine/pyrimidine phosphoribosyltransferase family. As to quaternary structure, homodimer.

The protein resides in the cytoplasm. It carries out the reaction AMP + diphosphate = 5-phospho-alpha-D-ribose 1-diphosphate + adenine. It functions in the pathway purine metabolism; AMP biosynthesis via salvage pathway; AMP from adenine: step 1/1. Its function is as follows. Catalyzes a salvage reaction resulting in the formation of AMP, that is energically less costly than de novo synthesis. The chain is Adenine phosphoribosyltransferase from Campylobacter hominis (strain ATCC BAA-381 / DSM 21671 / CCUG 45161 / LMG 19568 / NCTC 13146 / CH001A).